Consider the following 591-residue polypeptide: DEAD-box ATP-dependent RNA helicase 17 (591 aa).

The Q motif motif lies at 23 to 52 (CSFTDLGLHPTLCAHLQDKMGFQAPTRIQA). One can recognise a Helicase ATP-binding domain in the interval 55–248 (IPVAMSGQHM…KISLKNPVMI (194 aa)). Residue 68–75 (AATGTGKT) participates in ATP binding. Residues 181-184 (DEAD) carry the DEAD box motif. The region spanning 293-482 (QLVQRYVKVS…SFPVNGQRLH (190 aa)) is the Helicase C-terminal domain. The tract at residues 562–591 (GRSHQVQLKKRKKEQKRERPAKRRKIPAKR) is disordered. Basic residues predominate over residues 568–591 (QLKKRKKEQKRERPAKRRKIPAKR).

Belongs to the DEAD box helicase family. DDX31/DBP7 subfamily. Expressed in flowers and pollen grains.

Its subcellular location is the nucleus. It catalyses the reaction ATP + H2O = ADP + phosphate + H(+). May play a role in organellar ribosome biogenesis and suppress 16S rRNA maturation. This Oryza sativa subsp. japonica (Rice) protein is DEAD-box ATP-dependent RNA helicase 17.